The primary structure comprises 176 residues: Putative phosphohydrolase YueE (176 aa).

The HD domain maps to 23–139 (GVAHAIACAY…VKKADELDEE (117 aa)).

The sequence is that of Putative phosphohydrolase YueE (yueE) from Bacillus subtilis (strain 168).